Here is a 651-residue protein sequence, read N- to C-terminus: Chaperone protein HtpG (651 aa).

The interval 1–353 is a; substrate-binding; that stretch reads MAAHVEQLEF…AQDMSLNVSR (353 aa). The b stretch occupies residues 354–569; the sequence is EILQQDRQIR…TFGITPALAR (216 aa). The interval 570–651 is c; it reads MYRASGQPVP…RLTRTVGDQT (82 aa).

The protein belongs to the heat shock protein 90 family. In terms of assembly, homodimer.

The protein resides in the cytoplasm. In terms of biological role, molecular chaperone. Has ATPase activity. The sequence is that of Chaperone protein HtpG from Mycolicibacterium vanbaalenii (strain DSM 7251 / JCM 13017 / BCRC 16820 / KCTC 9966 / NRRL B-24157 / PYR-1) (Mycobacterium vanbaalenii).